Reading from the N-terminus, the 590-residue chain is Pescadillo homolog (590 aa).

Residues 297–318 are disordered; the sequence is AKADAGEEEEVEEEEEVEDDGL. Acidic residues predominate over residues 302-318; that stretch reads GEEEEVEEEEEVEDDGL. The BRCT domain occupies 337–446; the sequence is TAGQLFSNFT…KLLPVSEYAP (110 aa). The segment at 452–590 is disordered; sequence AHLSPWGDAG…RKLNEKKEKR (139 aa). Acidic residues predominate over residues 471–499; the sequence is DASDDDEDDEDIEVAPEDYDKDDEEEEAE. Residues 489–589 are a coiled coil; the sequence is YDKDDEEEEA…RRKLNEKKEK (101 aa). Basic and acidic residues-rich tracts occupy residues 500–517, 532–547, and 567–577; these read AEAK…KGTK, DKMT…DKKL, and NDKKSDREAEL.

It belongs to the pescadillo family. As to quaternary structure, component of the NOP7 complex, composed of ERB1, NOP7 and YTM1. The complex is held together by ERB1, which interacts with NOP7 via its N-terminal domain and with YTM1 via a high-affinity interaction between the seven-bladed beta-propeller domains of the 2 proteins. The NOP7 complex associates with the 66S pre-ribosome.

Its subcellular location is the nucleus. The protein resides in the nucleolus. It localises to the nucleoplasm. Its function is as follows. Component of the NOP7 complex, which is required for maturation of the 25S and 5.8S ribosomal RNAs and formation of the 60S ribosome. In Yarrowia lipolytica (strain CLIB 122 / E 150) (Yeast), this protein is Pescadillo homolog.